Consider the following 361-residue polypeptide: Riboflavin biosynthesis protein RibD (361 aa).

The region spanning 1–122 (MEEYYMKLAL…MMKEAGIEVR (122 aa)) is the CMP/dCMP-type deaminase domain. Residues 1 to 144 (MEEYYMKLAL…EKFLHFMRTG (144 aa)) form a deaminase region. A Zn(2+)-binding site is contributed by His-49. The active-site Proton donor is Glu-51. Zn(2+) contacts are provided by Cys-74 and Cys-83. The segment at 145-361 (LPYVTLKAAA…IKLTAKPTKE (217 aa)) is reductase. Ala-153 provides a ligand contact to NADP(+). Ser-167 contacts substrate. Residue Trp-169 coordinates NADP(+). Residue Arg-183 coordinates substrate. NADP(+)-binding residues include Thr-195 and Asp-199. Substrate is bound by residues Leu-203 and Arg-206. Residue Thr-221 participates in NADP(+) binding. Residue Glu-290 participates in substrate binding. An NADP(+)-binding site is contributed by 292 to 298 (GSAVHGS).

This sequence in the N-terminal section; belongs to the cytidine and deoxycytidylate deaminase family. The protein in the C-terminal section; belongs to the HTP reductase family. In terms of assembly, homotetramer. Zn(2+) serves as cofactor.

It catalyses the reaction 2,5-diamino-6-hydroxy-4-(5-phosphoribosylamino)-pyrimidine + H2O + H(+) = 5-amino-6-(5-phospho-D-ribosylamino)uracil + NH4(+). The catalysed reaction is 5-amino-6-(5-phospho-D-ribitylamino)uracil + NADP(+) = 5-amino-6-(5-phospho-D-ribosylamino)uracil + NADPH + H(+). It functions in the pathway cofactor biosynthesis; riboflavin biosynthesis; 5-amino-6-(D-ribitylamino)uracil from GTP: step 2/4. It participates in cofactor biosynthesis; riboflavin biosynthesis; 5-amino-6-(D-ribitylamino)uracil from GTP: step 3/4. In terms of biological role, converts 2,5-diamino-6-(ribosylamino)-4(3h)-pyrimidinone 5'-phosphate into 5-amino-6-(ribosylamino)-2,4(1h,3h)-pyrimidinedione 5'-phosphate. This is Riboflavin biosynthesis protein RibD (ribD) from Bacillus subtilis (strain 168).